We begin with the raw amino-acid sequence, 402 residues long: Acetylornithine aminotransferase (402 aa).

Residues 117-118 (GA) and Phe-143 each bind pyridoxal 5'-phosphate. Residue Arg-146 participates in N(2)-acetyl-L-ornithine binding. 231 to 234 (DEVQ) is a binding site for pyridoxal 5'-phosphate. Lys-260 is modified (N6-(pyridoxal phosphate)lysine). N(2)-acetyl-L-ornithine is bound at residue Thr-288. Thr-289 contacts pyridoxal 5'-phosphate.

Belongs to the class-III pyridoxal-phosphate-dependent aminotransferase family. ArgD subfamily. In terms of assembly, homodimer. Pyridoxal 5'-phosphate is required as a cofactor.

It localises to the cytoplasm. It carries out the reaction N(2)-acetyl-L-ornithine + 2-oxoglutarate = N-acetyl-L-glutamate 5-semialdehyde + L-glutamate. It functions in the pathway amino-acid biosynthesis; L-arginine biosynthesis; N(2)-acetyl-L-ornithine from L-glutamate: step 4/4. The chain is Acetylornithine aminotransferase from Corynebacterium efficiens (strain DSM 44549 / YS-314 / AJ 12310 / JCM 11189 / NBRC 100395).